Here is a 701-residue protein sequence, read N- to C-terminus: Elongation factor G (701 aa).

One can recognise a tr-type G domain in the interval 8-291; sequence SRYRNIGIVA…AVIDFLPAPT (284 aa). GTP contacts are provided by residues 17-24, 89-93, and 143-146; these read AHVDAGKT, DTPGH, and NKMD.

It belongs to the TRAFAC class translation factor GTPase superfamily. Classic translation factor GTPase family. EF-G/EF-2 subfamily.

Its subcellular location is the cytoplasm. Catalyzes the GTP-dependent ribosomal translocation step during translation elongation. During this step, the ribosome changes from the pre-translocational (PRE) to the post-translocational (POST) state as the newly formed A-site-bound peptidyl-tRNA and P-site-bound deacylated tRNA move to the P and E sites, respectively. Catalyzes the coordinated movement of the two tRNA molecules, the mRNA and conformational changes in the ribosome. The chain is Elongation factor G from Pseudomonas fluorescens (strain Pf0-1).